We begin with the raw amino-acid sequence, 424 residues long: UPF0053 protein MG146 (424 aa).

The region spanning 6–191 (SGLTLTVIIL…EQNGLFSKED (186 aa)) is the CNNM transmembrane domain. Transmembrane regions (helical) follow at residues 7–27 (GLTLTVIILSIILLAFISTVV), 71–91 (LITILITNNIVAIMVSNILFL), 101–121 (LLSSVLNLVVSGVLIVSFCEI), and 135–155 (LVLFAYLVYFFYLIFWPITKL). CBS domains are found at residues 210–270 (MIKW…PKSL) and 272–332 (LNQL…IYDE).

The protein belongs to the UPF0053 family.

The protein resides in the cell membrane. This Mycoplasma genitalium (strain ATCC 33530 / DSM 19775 / NCTC 10195 / G37) (Mycoplasmoides genitalium) protein is UPF0053 protein MG146.